The primary structure comprises 230 residues: Flagellar L-ring protein (230 aa).

An N-terminal signal peptide occupies residues 1–16; it reads MYLVFGIIFTSVIVTS. Residue C17 is the site of N-palmitoyl cysteine attachment. C17 carries S-diacylglycerol cysteine lipidation.

The protein belongs to the FlgH family. The basal body constitutes a major portion of the flagellar organelle and consists of four rings (L,P,S, and M) mounted on a central rod.

It is found in the cell outer membrane. The protein resides in the bacterial flagellum basal body. Functionally, assembles around the rod to form the L-ring and probably protects the motor/basal body from shearing forces during rotation. In Bartonella bacilliformis (strain ATCC 35685 / KC583 / Herrer 020/F12,63), this protein is Flagellar L-ring protein.